A 167-amino-acid polypeptide reads, in one-letter code: Small ribosomal subunit protein uS5 (167 aa).

The 64-residue stretch at 12 to 75 folds into the S5 DRBM domain; the sequence is LQEKLIAVNR…EKARRNMVTV (64 aa).

Belongs to the universal ribosomal protein uS5 family. In terms of assembly, part of the 30S ribosomal subunit. Contacts proteins S4 and S8.

In terms of biological role, with S4 and S12 plays an important role in translational accuracy. Located at the back of the 30S subunit body where it stabilizes the conformation of the head with respect to the body. The polypeptide is Small ribosomal subunit protein uS5 (Shewanella denitrificans (strain OS217 / ATCC BAA-1090 / DSM 15013)).